We begin with the raw amino-acid sequence, 367 residues long: MKIIQTFFIITLLWLSQGVQAERVKDLAAIAGVRSNQLVGYGLVVGLSGTGDQVTQISYTRQSLRNMLREFGIIMPPGVNLQPKNVAAVSIHAQLPPFAKPGQSIDITVSSLGNAKSLRGGSLLLTPLKGADGRVYAMAQGNLIVGGFGAEGNDGSRVTVNIPSTGRIPNGATVERGVPNPFNNGGPIILNLHAADFTTANRVAAAINSAIGAGTARPLDGASIQVNAPAVPAQRVSFVSLLENLEVDPGEAPAKIVINSRTGTVVIGQHVRVQPAAVSHGRLTVTITANPAISQPPPLSGGQTAVVPRTDIDIQEEGSRMFLFAPGVSLGEIVRAVNQVGAAPGDLVAILEALKQVGALSAELVVL.

A signal peptide spans 1 to 21 (MKIIQTFFIITLLWLSQGVQA).

It belongs to the FlgI family. As to quaternary structure, the basal body constitutes a major portion of the flagellar organelle and consists of four rings (L,P,S, and M) mounted on a central rod.

The protein localises to the periplasm. It localises to the bacterial flagellum basal body. Its function is as follows. Assembles around the rod to form the L-ring and probably protects the motor/basal body from shearing forces during rotation. This Nitrosococcus oceani (strain ATCC 19707 / BCRC 17464 / JCM 30415 / NCIMB 11848 / C-107) protein is Flagellar P-ring protein.